Reading from the N-terminus, the 286-residue chain is 4-hydroxybenzoate octaprenyltransferase (286 aa).

A run of 7 helical transmembrane segments spans residues 21 to 40, 95 to 115, 142 to 162, 167 to 187, 211 to 231, 235 to 255, and 266 to 286; these read GTLLLMWPCLMALMLAAGGM, ILFVVLGLSAFGLVLLLNGLV, FLGVVWSWSIPMAYAAQTGEV, WWLFAANWFWTVAYDTMYAMV, IIGLFQIAALVCFIAAGWSAE, LYGLGLLTFVGFSTYQQMLIF, and FLNNNWAGLALFVGLGADYLI.

Belongs to the UbiA prenyltransferase family. Mg(2+) is required as a cofactor.

It is found in the cell inner membrane. It catalyses the reaction all-trans-octaprenyl diphosphate + 4-hydroxybenzoate = 4-hydroxy-3-(all-trans-octaprenyl)benzoate + diphosphate. It participates in cofactor biosynthesis; ubiquinone biosynthesis. Functionally, catalyzes the prenylation of para-hydroxybenzoate (PHB) with an all-trans polyprenyl group. Mediates the second step in the final reaction sequence of ubiquinone-8 (UQ-8) biosynthesis, which is the condensation of the polyisoprenoid side chain with PHB, generating the first membrane-bound Q intermediate 3-octaprenyl-4-hydroxybenzoate. The polypeptide is 4-hydroxybenzoate octaprenyltransferase (Shewanella putrefaciens (strain CN-32 / ATCC BAA-453)).